Consider the following 507-residue polypeptide: Acetylcholine receptor subunit beta-type lev-1 (507 aa).

Positions 1–31 are cleaved as a signal peptide; it reads MMLGGGGGCGAGGTWLGFLVFLAVSLRNHST. Residues asparagine 28, asparagine 58, and asparagine 109 are each glycosylated (N-linked (GlcNAc...) asparagine). Over 32–138 the chain is Extracellular; the sequence is CEDIDAEDRL…NNADGNYEVS (107 aa). The helical transmembrane segment at 139 to 159 threads the bilayer; that stretch reads FMCNVLILSTGTVLWVPPAIY. An intrachain disulfide couples cysteine 163 to cysteine 177. Transmembrane regions (helical) follow at residues 243 to 263, 271 to 291, and 305 to 325; these read VVLI…FYLP, GLTM…SKIL, and LLLT…ICNI. Residues 373–392 form a disordered region; that stretch reads GPSVEENPMRSGEHHPLCRH. The segment covering 379–392 has biased composition (basic and acidic residues); sequence NPMRSGEHHPLCRH. The chain crosses the membrane as a helical span at residues 454-474; it reads FLLYGFFGATVGGTIGIIFTA.

It belongs to the ligand-gated ion channel (TC 1.A.9) family. Acetylcholine receptor (TC 1.A.9.1) subfamily. As to quaternary structure, interacts with unc-29. Component of nicotinic acetylcholine receptor composed of 2 non-alpha subunits lev-1 and unc-29, and 3 alpha subunits unc-38, unc-63 and lev-8.

It localises to the postsynaptic cell membrane. The protein resides in the cell membrane. Functionally, non-alpha subunit of nicotinic acetylcholine receptor (nAChR). Involved in nAChR sensitivity to nicotine. This Caenorhabditis elegans protein is Acetylcholine receptor subunit beta-type lev-1 (lev-1).